Consider the following 218-residue polypeptide: MTLSRVHQQVIAFPAAKTDTMSYLPDPASINNHQIPTSSKVSYLTGKGKSMLRKKKTDSFTNGARDQDKLGPKLTETVKRKLSLGAKILQMGGLEKIYKRLFKVCDQEKLFKAYQCYLSTTAGPIAGLLFISSKKIAFCSERSIKVASPQGVLSRVHYKVSIPLCKINGVNQSQNTKKPSQKYLEIVTIDNFDFWFMGFVSYQKAFNCLEKALNNDEQ.

The GRAM domain maps to 96 to 174 (KIYKRLFKVC…CKINGVNQSQ (79 aa)).

Belongs to the GEM family.

In Arabidopsis thaliana (Mouse-ear cress), this protein is GEM-like protein 6.